The sequence spans 129 residues: Small ribosomal subunit protein eS6 (129 aa).

It belongs to the eukaryotic ribosomal protein eS6 family.

This Archaeoglobus fulgidus (strain ATCC 49558 / DSM 4304 / JCM 9628 / NBRC 100126 / VC-16) protein is Small ribosomal subunit protein eS6.